Consider the following 234-residue polypeptide: tRNA1(Val) (adenine(37)-N6)-methyltransferase (234 aa).

Belongs to the methyltransferase superfamily. tRNA (adenine-N(6)-)-methyltransferase family.

It localises to the cytoplasm. It catalyses the reaction adenosine(37) in tRNA1(Val) + S-adenosyl-L-methionine = N(6)-methyladenosine(37) in tRNA1(Val) + S-adenosyl-L-homocysteine + H(+). Its function is as follows. Specifically methylates the adenine in position 37 of tRNA(1)(Val) (anticodon cmo5UAC). The sequence is that of tRNA1(Val) (adenine(37)-N6)-methyltransferase from Aliivibrio fischeri (strain MJ11) (Vibrio fischeri).